Here is a 389-residue protein sequence, read N- to C-terminus: Metal tolerance protein 2 (389 aa).

The Cytoplasmic segment spans residues 1-81; that stretch reads MGFRLAHLAA…GGEASERIFR (81 aa). A helical transmembrane segment spans residues 82 to 102; it reads LGLAADVVLTVGKAVTGYLSG. At 103 to 104 the chain is on the vacuolar side; the sequence is ST. A helical transmembrane segment spans residues 105–125; that stretch reads AIAADAAHSLSDIVLSGVALL. Residues 126–148 are Cytoplasmic-facing; the sequence is SYKAAKAPRDKEHPYGHGKFESL. A helical transmembrane segment spans residues 149–169; sequence GALGISSMLLVTAGGIAWHAF. Topologically, residues 170-206 are vacuolar; that stretch reads DVLQGVMSSAPDIIGNVSHAHHSHGSSGHHHGIDLEH. Residues 207 to 227 form a helical membrane-spanning segment; sequence PILALSVTAFAISVKEGLYWI. Topologically, residues 228 to 250 are cytoplasmic; it reads TKRAGEKEGSGLMKANAWHHRSD. Residues 251–271 traverse the membrane as a helical segment; that stretch reads AISSVVALLGVGGSILGVPYL. Residues 272–275 lie on the Vacuolar side of the membrane; that stretch reads DPLA. The chain crosses the membrane as a helical span at residues 276-296; sequence GLVVSGMILKAGVHTGYESVL. Residues 297–389 lie on the Cytoplasmic side of the membrane; the sequence is ELVDAAVDPS…SLQPLNQNAL (93 aa).

This sequence belongs to the cation diffusion facilitator (CDF) transporter (TC 2.A.4) family. SLC30A subfamily.

It is found in the vacuole membrane. In terms of biological role, involved in sequestration of excess metal in the cytoplasm into vacuoles to maintain metal homeostasis. This chain is Metal tolerance protein 2 (MTP2), found in Oryza sativa subsp. japonica (Rice).